We begin with the raw amino-acid sequence, 859 residues long: MERTRSKPVRNLPETIHSLLGLKSHMTSDWVKSVCNIAKNTSSTSKKEEDDFVSVDLQSIRDQLSALTVQVNDQNKLRRQILNEFLDLKGNIRVFCRVKPLGATEKLRPPVASDTRNVIIKLSETKRKTYNFDRVFQPDSSQDDVFLEIEPVIKSVIDGYNACIFAYGQTGTGKTYTMEGLPNSPGIVPRAIKGLFKQVEESNHMFTIHFSMLEIYMGNLKDLLLSEATKPISPIPPSLSIHTDPNGEIDIENLVKLKVDDFNEILRLYKVGCRSRATASTNSNSVSSRSHCMIRVSVTSLGAPERRRETNKIWLVDLGGSERVLKTRATGRRFDEGKAINLSLSALGDVINSLQRKNSHIPYRNSKLTQVLKDSLGQDSKTLMLVHISPKEDDLCETICSLNFATRAKNIHLGQDESTEEQAKKEAVMMNLQKMMEKIEQEREMSLRKMRNLNETLEKLTGKPHVIEEEEKDVVREVIHVTPKKPRNKSRRASDVFPSFMRPTASSNRRLSGADFSVTPNSSSFKSRRNSMISVRAESACLPVKKKKNRFDSACDSSDRSVSKSTSIMRQNTADDATVYSQDISECDIKLVVSEHKPKPLQMGPGSATKSRSNISNFEKDVMQKIGGTEFSRINSWLRSQSENRSYVLDKTQLPATHFLENLNRSLEKSPTQSFTTEKITGNELEGIEETKTNETVVNPTLMLKKLFELQCLCSAEEEDQILSRFPIPGYEDDDESRYPPILENDGFSQHIDNEWFGVNNYSADWERDSPATIPLLECEPDLKQLLPELGLDRSLKPRGLAVAEGAAPPLLRAQETLGERGKGPTFMQKLQALCFRILLGLGFMDVGFGNDFFNGLTK.

In terms of domain architecture, Kinesin motor spans 91 to 411 (NIRVFCRVKP…LNFATRAKNI (321 aa)). Residue 168–175 (GQTGTGKT) coordinates ATP. Residues 422–463 (QAKKEAVMMNLQKMMEKIEQEREMSLRKMRNLNETLEKLTGK) adopt a coiled-coil conformation. Residues 511–530 (LSGADFSVTPNSSSFKSRRN) form a disordered region. Polar residues predominate over residues 518–530 (VTPNSSSFKSRRN).

Belongs to the TRAFAC class myosin-kinesin ATPase superfamily. Kinesin family. KIN-14 subfamily.

This chain is Kinesin-like protein KIN-14T, found in Arabidopsis thaliana (Mouse-ear cress).